A 233-amino-acid chain; its full sequence is Ion-translocating oxidoreductase complex subunit E (233 aa).

5 helical membrane-spanning segments follow: residues 22–42, 69–89, 93–113, 128–148, and 182–202; these read LLGLCPLLAVTSTATNALGLG, IPIYVMIIAAVVSCVQMLINA, GLYQSLGIFIPLIVTNCIVVG, ALDGMAIGLGATSVMVVLGSI, and PMLLAMLPPGAFIGLGMLLAA.

Belongs to the NqrDE/RnfAE family. As to quaternary structure, the complex is composed of six subunits: RnfA, RnfB, RnfC, RnfD, RnfE and RnfG.

It localises to the cell inner membrane. Functionally, part of a membrane-bound complex that couples electron transfer with translocation of ions across the membrane. In Erwinia tasmaniensis (strain DSM 17950 / CFBP 7177 / CIP 109463 / NCPPB 4357 / Et1/99), this protein is Ion-translocating oxidoreductase complex subunit E.